The chain runs to 250 residues: Indole-3-glycerol phosphate synthase (250 aa).

The protein belongs to the TrpC family.

It catalyses the reaction 1-(2-carboxyphenylamino)-1-deoxy-D-ribulose 5-phosphate + H(+) = (1S,2R)-1-C-(indol-3-yl)glycerol 3-phosphate + CO2 + H2O. It functions in the pathway amino-acid biosynthesis; L-tryptophan biosynthesis; L-tryptophan from chorismate: step 4/5. This is Indole-3-glycerol phosphate synthase from Bacillus pumilus (strain SAFR-032).